The sequence spans 1732 residues: Lys-gingipain W83 (1732 aa).

A signal peptide spans 1–24; it reads MRKLLLLIAASLLGVGLYAQSAKI. A propeptide spanning residues 25 to 228 is cleaved from the precursor; it reads KLDAPTTRTT…ETAYKQLFNR (204 aa). Ca(2+) contacts are provided by aspartate 313, aspartate 337, aspartate 339, phenylalanine 341, and glutamate 343. The Proton donor role is filled by histidine 444. The active-site Nucleophile is the cysteine 477. Residues phenylalanine 482 and glutamate 491 each coordinate Ca(2+). Positions 965-988 are disordered; it reads DAPNGTPNPNPNPNPNPGTTLSES. Positions 970-980 are enriched in pro residues; it reads TPNPNPNPNPN. 21 residues coordinate Ca(2+): serine 988, glutamate 990, aspartate 1001, aspartate 1003, aspartate 1005, histidine 1007, serine 1022, glycine 1024, asparagine 1043, aspartate 1146, glutamate 1147, aspartate 1433, glutamate 1435, aspartate 1446, aspartate 1448, aspartate 1450, asparagine 1452, serine 1470, isoleucine 1472, asparagine 1490, and aspartate 1595.

The protein belongs to the peptidase C25 family. Post-translationally, proteolytically cleaved into a catalytic subunit and three adhesins. Arg-gingipain is involved in this post-translational processing.

The protein localises to the secreted. It catalyses the reaction Endopeptidase with strict specificity for lysyl bonds.. Functionally, cysteine proteinase with a strong preference for substrates with Lys in the P1 position. Hydrolyzes bovine hemoglobin, bovine serum albumin, casein, human placental type I collagen and human IgA and IgG. Disrupts the functions of polymorphonuclear leukocytes. May act as a virulence factor in the development of peridontal disease. Involved in the coaggregation of P.gingivalis with other oral bacteria. Has hemolytic activity; this is mediated by the adhesin domains and does not require the catalytic domain. This is Lys-gingipain W83 from Porphyromonas gingivalis (Bacteroides gingivalis).